Here is a 65-residue protein sequence, read N- to C-terminus: Large ribosomal subunit protein bL35 (65 aa).

The segment at 1 to 23 (MPKMKSNRGAAKRFKRTGSGKFK) is disordered. Positions 10–23 (AAKRFKRTGSGKFK) are enriched in basic residues.

Belongs to the bacterial ribosomal protein bL35 family.

The sequence is that of Large ribosomal subunit protein bL35 from Acidithiobacillus ferrooxidans (strain ATCC 53993 / BNL-5-31) (Leptospirillum ferrooxidans (ATCC 53993)).